The primary structure comprises 492 residues: uncharacterized protein (492 aa).

The next 12 membrane-spanning stretches (helical) occupy residues 13–33, 42–62, 97–117, 150–170, 180–200, 222–242, 258–278, 320–340, 359–379, 391–411, 428–448, and 463–483; these read LGFI…WRFG, GAFL…LMIL, FIIT…LIIL, GILV…SAGI, IMIP…LTLP, VWLS…GILI, AVTV…AVFG, FGIV…VSIV, LLAV…GAGL, GYLL…LFGG, VWWK…VVFL, and TTYV…SVIL.

It belongs to the sodium:neurotransmitter symporter (SNF) (TC 2.A.22) family.

The protein localises to the cell membrane. Its function is as follows. Putative sodium-dependent transporter. This is an uncharacterized protein from Methanocaldococcus jannaschii (strain ATCC 43067 / DSM 2661 / JAL-1 / JCM 10045 / NBRC 100440) (Methanococcus jannaschii).